The chain runs to 308 residues: Follistatin-related protein 1 (308 aa).

Positions 1-20 (MWKRWLALALALVAVAWVRA) are cleaved as a signal peptide. The Follistatin-like domain maps to 30 to 53 (ICANVFCGAGRECAVTEKGEPTCL). 5 disulfides stabilise this stretch: cysteine 31/cysteine 42, cysteine 36/cysteine 52, cysteine 54/cysteine 84, cysteine 58/cysteine 77, and cysteine 66/cysteine 98. The region spanning 48-100 (GEPTCLCIEQCKPHKRPVCGSNGKTYLNHCELHRDACLTGSKIQVDYDGHCKE) is the Kazal-like domain. A glycan (N-linked (GlcNAc...) asparagine) is linked at asparagine 144. In terms of domain architecture, EF-hand 1 spans 144 to 178 (NYSEILDKYFKNFDNGDSRLDSSEFLKFVEQNETA). Serine 165 carries the post-translational modification Phosphoserine. Residues asparagine 175 and asparagine 180 are each glycosylated (N-linked (GlcNAc...) asparagine). The region spanning 193–228 (LRGLCVDALIELSDENADWKLSFQEFLKCLNPSFNP) is the EF-hand 2 domain. The VWFC domain maps to 233–287 (CALEDETYADGAETEVDCNRCVCACGNWVCTAMTCDGKNQKGAQTQTEEEMTRYV).

As to quaternary structure, homodimer. Interacts with SCN10A. Interacts with DIP2A; DIP2A may act as a cell surface receptor for FSTL1. Interacts with BMP4. Interacts with CD14; this interaction promotes TL4-mediated signaling cascade.

The protein localises to the secreted. In terms of biological role, secreted glycoprotein that is involved in various physiological processes, such as angiogenesis, regulation of the immune response, cell proliferation and differentiation. Plays a role in the development of the central nervous system, skeletal system, lungs, and ureter. Promotes endothelial cell survival, migration and differentiation into network structures in an AKT-dependent manner. Also promotes survival of cardiac myocytes. Initiates various signaling cascades by activating different receptors on the cell surface such as DIP2A, TLR4 or BMP receptors. This is Follistatin-related protein 1 (FSTL1) from Macaca fascicularis (Crab-eating macaque).